The following is a 245-amino-acid chain: Biosynthetic peptidoglycan transglycosylase (245 aa).

Residues 24-44 form a helical membrane-spanning segment; it reads LVVIGAWLAGILLFSFLPVPF.

This sequence belongs to the glycosyltransferase 51 family.

The protein resides in the cell inner membrane. The catalysed reaction is [GlcNAc-(1-&gt;4)-Mur2Ac(oyl-L-Ala-gamma-D-Glu-L-Lys-D-Ala-D-Ala)](n)-di-trans,octa-cis-undecaprenyl diphosphate + beta-D-GlcNAc-(1-&gt;4)-Mur2Ac(oyl-L-Ala-gamma-D-Glu-L-Lys-D-Ala-D-Ala)-di-trans,octa-cis-undecaprenyl diphosphate = [GlcNAc-(1-&gt;4)-Mur2Ac(oyl-L-Ala-gamma-D-Glu-L-Lys-D-Ala-D-Ala)](n+1)-di-trans,octa-cis-undecaprenyl diphosphate + di-trans,octa-cis-undecaprenyl diphosphate + H(+). Its pathway is cell wall biogenesis; peptidoglycan biosynthesis. Functionally, peptidoglycan polymerase that catalyzes glycan chain elongation from lipid-linked precursors. This chain is Biosynthetic peptidoglycan transglycosylase, found in Pectobacterium atrosepticum (strain SCRI 1043 / ATCC BAA-672) (Erwinia carotovora subsp. atroseptica).